Here is a 474-residue protein sequence, read N- to C-terminus: Glutamate--tRNA ligase 2 (474 aa).

A 'HIGH' region motif is present at residues 16-26 (PSPTGFLHIGG). The short motif at 245-249 (KLSKR) is the 'KMSKS' region element. Lys248 contributes to the ATP binding site.

The protein belongs to the class-I aminoacyl-tRNA synthetase family. Glutamate--tRNA ligase type 1 subfamily. In terms of assembly, monomer.

The protein localises to the cytoplasm. It carries out the reaction tRNA(Glu) + L-glutamate + ATP = L-glutamyl-tRNA(Glu) + AMP + diphosphate. Its function is as follows. Catalyzes the attachment of glutamate to tRNA(Glu) in a two-step reaction: glutamate is first activated by ATP to form Glu-AMP and then transferred to the acceptor end of tRNA(Glu). This is Glutamate--tRNA ligase 2 from Rhizorhabdus wittichii (strain DSM 6014 / CCUG 31198 / JCM 15750 / NBRC 105917 / EY 4224 / RW1) (Sphingomonas wittichii).